The chain runs to 118 residues: Large ribosomal subunit protein bL20 (118 aa).

Belongs to the bacterial ribosomal protein bL20 family.

Its function is as follows. Binds directly to 23S ribosomal RNA and is necessary for the in vitro assembly process of the 50S ribosomal subunit. It is not involved in the protein synthesizing functions of that subunit. The protein is Large ribosomal subunit protein bL20 of Bacillus cytotoxicus (strain DSM 22905 / CIP 110041 / 391-98 / NVH 391-98).